Consider the following 203-residue polypeptide: Peptide deformylase (203 aa).

Positions 130 and 173 each coordinate Fe cation. Glu174 is an active-site residue. His177 lines the Fe cation pocket.

Belongs to the polypeptide deformylase family. Fe(2+) is required as a cofactor.

It carries out the reaction N-terminal N-formyl-L-methionyl-[peptide] + H2O = N-terminal L-methionyl-[peptide] + formate. Removes the formyl group from the N-terminal Met of newly synthesized proteins. Requires at least a dipeptide for an efficient rate of reaction. N-terminal L-methionine is a prerequisite for activity but the enzyme has broad specificity at other positions. The protein is Peptide deformylase of Streptococcus pneumoniae serotype 2 (strain D39 / NCTC 7466).